The sequence spans 1068 residues: tRNA wybutosine-synthesizing protein 4 (1068 aa).

Positions 1–31 are disordered; that stretch reads MCPPEQPAKAMAPSKSNQAAKSAVPTKEEKS. Residues Arg81, Gly107, Asp134, 181–182, and Glu208 each bind S-adenosyl-L-methionine; that span reads DL. Residues 876-1024 form the JmjC domain; the sequence is ADFPSLSSDF…ALGRDVYGNR (149 aa).

It belongs to the methyltransferase superfamily. LCMT family.

The enzyme catalyses 7-[(3S)-3-amino-3-carboxypropyl]wyosine(37) in tRNA(Phe) + S-adenosyl-L-methionine = 7-[(3S)-(3-amino-3-methoxycarbonyl)propyl]wyosine(37) in tRNA(Phe) + S-adenosyl-L-homocysteine. It carries out the reaction 7-[(3S)-(3-amino-3-methoxycarbonyl)propyl]wyosine(37) in tRNA(Phe) + S-adenosyl-L-methionine + CO2 = wybutosine(37) in tRNA(Phe) + S-adenosyl-L-homocysteine + 2 H(+). It participates in tRNA modification; wybutosine-tRNA(Phe) biosynthesis. Probable S-adenosyl-L-methionine-dependent methyltransferase that acts as a component of the wybutosine biosynthesis pathway. Wybutosine is a hyper modified guanosine with a tricyclic base found at the 3'-position adjacent to the anticodon of eukaryotic phenylalanine tRNA. May methylate the carboxyl group of leucine residues to form alpha-leucine ester residues. This chain is tRNA wybutosine-synthesizing protein 4 (ppm2), found in Emericella nidulans (strain FGSC A4 / ATCC 38163 / CBS 112.46 / NRRL 194 / M139) (Aspergillus nidulans).